The primary structure comprises 105 residues: uncharacterized protein (105 aa).

This is an uncharacterized protein from Rickettsia prowazekii (strain Madrid E).